A 576-amino-acid polypeptide reads, in one-letter code: 4-alpha-glucanotransferase DPE1, chloroplastic/amyloplastic (576 aa).

Residues 1 to 45 (MSILLRPSSSPSLCSSLKLFRLSSPDSLIDAAVLRNRTKPSQSFR) constitute a chloroplast transit peptide.

Belongs to the disproportionating enzyme family.

It is found in the plastid. The protein localises to the chloroplast. Its subcellular location is the amyloplast. The enzyme catalyses Transfers a segment of a (1-&gt;4)-alpha-D-glucan to a new position in an acceptor, which may be glucose or a (1-&gt;4)-alpha-D-glucan.. Functionally, chloroplastic alpha-glucanotransferase involved in maltotriose metabolism. Probably uses maltotriose as substrate to transfer a maltosyl unit from one molecule to another, resulting in glucose and maltopentaose. The latter can then be further metabolized to maltose and maltotriose by beta-amylase. Required for normal starch degradation in leaves. The chain is 4-alpha-glucanotransferase DPE1, chloroplastic/amyloplastic (DPE1) from Arabidopsis thaliana (Mouse-ear cress).